A 137-amino-acid polypeptide reads, in one-letter code: 2-iminobutanoate/2-iminopropanoate deaminase (137 aa).

The residue at position 2 (S2) is an N-acetylserine. N6-succinyllysine occurs at positions 13 and 67. T74 is modified (phosphothreonine). The residue at position 136 (S136) is a Phosphoserine.

As to quaternary structure, homotrimer. Interacts with YTHDF2. In terms of tissue distribution, expressed by various malignant neoplasms.

It is found in the cytoplasm. The protein localises to the nucleus. Its subcellular location is the peroxisome. It localises to the mitochondrion. It catalyses the reaction 2-iminobutanoate + H2O = 2-oxobutanoate + NH4(+). It carries out the reaction 2-iminopropanoate + H2O = pyruvate + NH4(+). In terms of biological role, catalyzes the hydrolytic deamination of enamine/imine intermediates that form during the course of normal metabolism. May facilitate the release of ammonia from these potentially toxic reactive metabolites, reducing their impact on cellular components. It may act on enamine/imine intermediates formed by several types of pyridoxal-5'-phosphate-dependent dehydratases including L-threonine dehydratase. Also promotes endoribonucleolytic cleavage of some transcripts by promoting recruitment of the ribonuclease P/MRP complex. Acts by bridging YTHDF2 and the ribonuclease P/MRP complex. RIDA/HRSP12 binds to N6-methyladenosine (m6A)-containing mRNAs containing a 5'-GGUUC-3' motif: cooperative binding of RIDA/HRSP12 and YTHDF2 to such transcripts lead to recruitment of the ribonuclease P/MRP complex and subsequent endoribonucleolytic cleavage. The polypeptide is 2-iminobutanoate/2-iminopropanoate deaminase (Capra hircus (Goat)).